A 582-amino-acid chain; its full sequence is DnaJ protein ERDJ3A (582 aa).

The first 25 residues, 1–25 (MGIPVRSLLVASIVLSSIALHVAAA), serve as a signal peptide directing secretion. The region spanning 29–93 (DPYKVLGVDK…EKRKNYDLYG (65 aa)) is the J domain. Asparagine 61 carries N-linked (GlcNAc...) asparagine glycosylation. Residues 178 to 201 (GGSQHTGSAGKARRGTKSSGHDSS) are disordered. Residues 407 to 437 (VKDLRSGIKELKNLLENFEKKNKKLASNQAK) are a coiled coil.

As to quaternary structure, interacts with BIP5.

It localises to the endoplasmic reticulum. It is found in the vacuole. Its function is as follows. May play a role in protein folding in the endoplasmic reticulum. The chain is DnaJ protein ERDJ3A from Oryza sativa subsp. japonica (Rice).